A 115-amino-acid chain; its full sequence is Histidine-rich carboxyl terminus protein 1 (115 aa).

Residues Ala-9–Ala-29 traverse the membrane as a helical segment. The disordered stretch occupies residues Gly-86–Arg-115. Basic residues predominate over residues Leu-87–Arg-115.

It is found in the membrane. This is Histidine-rich carboxyl terminus protein 1 (HRCT1) from Homo sapiens (Human).